The sequence spans 90 residues: Essential MCU regulator, mitochondrial (90 aa).

Residues 49–68 (GVLKLIFVSASSLYIGGLIA) form a helical membrane-spanning segment.

It belongs to the SMDT1/EMRE family.

It is found in the mitochondrion inner membrane. Its function is as follows. Essential regulatory subunit of the mitochondrial calcium uniporter (mcu-1) channel, a protein that mediates calcium uptake into mitochondria. In Caenorhabditis elegans, this protein is Essential MCU regulator, mitochondrial.